Consider the following 78-residue polypeptide: MSDVLERVSKIVIEHLDVEAEKVTDKASFIDDLGADSLDNVELVMAFEEEFDIEIPDDAAEHIQTVGDAVKFISEKVG.

The Carrier domain occupies 2-77 (SDVLERVSKI…DAVKFISEKV (76 aa)). Serine 37 carries the post-translational modification O-(pantetheine 4'-phosphoryl)serine.

Belongs to the acyl carrier protein (ACP) family. 4'-phosphopantetheine is transferred from CoA to a specific serine of apo-ACP by AcpS. This modification is essential for activity because fatty acids are bound in thioester linkage to the sulfhydryl of the prosthetic group.

Its subcellular location is the cytoplasm. Its pathway is lipid metabolism; fatty acid biosynthesis. Its function is as follows. Carrier of the growing fatty acid chain in fatty acid biosynthesis. This Maricaulis maris (strain MCS10) (Caulobacter maris) protein is Acyl carrier protein.